We begin with the raw amino-acid sequence, 331 residues long: Gem-associated protein 2 (331 aa).

3 disordered regions span residues 1-23 (MDEFQSKAFEVGEEIEPDDNEPL), 101-130 (SNRPSNNNNNNNNNNNNNNNNNNNNNLIPQ), and 151-222 (NNNN…TKKP). The span at 11–21 (VGEEIEPDDNE) shows a compositional bias: acidic residues. Low complexity predominate over residues 106–126 (NNNNNNNNNNNNNNNNNNNNN). Over residues 165 to 215 (DNQEDDDDDENNEDYEYNENKEEEEEEEEEEEEEEEVEEEEEEEEEEEEVV) the composition is skewed to acidic residues. Residues 173-224 (DENNEDYEYNENKEEEEEEEEEEEEEEEVEEEEEEEEEEEEVVDYSTKKPTL) adopt a coiled-coil conformation.

It belongs to the gemin-2 family.

It localises to the nucleus. The protein resides in the gem. It is found in the cytoplasm. Its function is as follows. The SMN complex catalyzes the assembly of small nuclear ribonucleoproteins (snRNPs), the building blocks of the spliceosome, and thereby plays an important role in the splicing of cellular pre-mRNAs. Most spliceosomal snRNPs contain a common set of Sm proteins SNRPB, SNRPD1, SNRPD2, SNRPD3, SNRPE, SNRPF and SNRPG that assemble in a heptameric protein ring on the Sm site of the small nuclear RNA to form the core snRNP (Sm core). In the cytosol, the Sm proteins SNRPD1, SNRPD2, SNRPE, SNRPF and SNRPG (5Sm) are trapped in an inactive 6S pICln-Sm complex by the chaperone CLNS1A that controls the assembly of the core snRNP. To assemble core snRNPs, the SMN complex accepts the trapped 5Sm proteins from CLNS1A. Binding of snRNA inside 5Sm ultimately triggers eviction of the SMN complex, thereby allowing binding of SNRPD3 and SNRPB to complete assembly of the core snRNP. Within the SMN complex, GEMIN2 constrains the conformation of 5Sm, thereby promoting 5Sm binding to snRNA containing the snRNP code (a nonameric Sm site and a 3'-adjacent stem-loop), thus preventing progression of assembly until a cognate substrate is bound. May play an essential role in spliceosomal snRNP assembly in the cytoplasm and may be required for pre-mRNA splicing in the nucleus. This Dictyostelium discoideum (Social amoeba) protein is Gem-associated protein 2 (gemin2).